A 523-amino-acid polypeptide reads, in one-letter code: FAD-dependent monooxygenase drtC (523 aa).

The 176-residue stretch at 77 to 252 (TSLNSACIVL…TNFEVRAFPQ (176 aa)) folds into the FAD-binding PCMH-type domain.

The protein belongs to the oxygen-dependent FAD-linked oxidoreductase family. The cofactor is FAD.

The protein operates within secondary metabolite biosynthesis; terpenoid biosynthesis. Functionally, FAD-dependent monooxygenase; part of the gene cluster that mediates the biosynthesis of various drimane-type sesquiterpene esters, compounds that exhibit diverse biological activities and are widely present in eukaryotes. The pathway begins with the synthesis of the backbone drimenol by the terpene cyclase drtB using farnesyl pyrophosphate (FPP) as substrate. The cytochrome P450 monooxygenase drtD is then responsible for the hydroxylations at C-6, C-9 and C-12, as well as the oxidation of hydroxyl groups at C-6 and C-11 to a ketone and an aldehyde, respectively. Then, the biosynthesis can go in two directions, either the hydroxylated drimenol is further hydroxylated at C-2 and C-3 by an enzyme(s) not associated with the drt cluster, or the FAD-binding oxidoreductase drtC further oxidizes C-11 or C-12 to form the butyrolactone ring. DrtB, drtD and drtC are solely responsible for the formation of the different drimane structures observed during drimane sesquiterpenes biosynthesis. The polyketide synthase drtA synthesizes different lengths (C6 and C8) of PKS chains, which are then oxidized to varying degrees by the short-chain dehydrogenase drtF. Finally, these PKS chains are transferred onto drimane sesquiterpenes by the acyltransferase drtE, forming the sesquiterpene esters. In addition to the different fatty acyl-CoA chains produced by drtA, drtE is also able to use cinnamoyl-CoA as a substrate. The polypeptide is FAD-dependent monooxygenase drtC (Aspergillus calidoustus).